The sequence spans 528 residues: Sodium-dependent lysophosphatidylcholine symporter 1 (528 aa).

Topologically, residues 1–37 (MAGGGGAERVRVGAAAAGLLPPSCRQPRRRESRERLS) are cytoplasmic. Residues 38–66 (VCSKLCYAVGGAPYQTTGCALGFFLQIYL) form a helical membrane-spanning segment. At 67-73 (LDVAQLD) the chain is on the extracellular side. A helical membrane pass occupies residues 74 to 99 (PFYASIILFVGRAWDAITDPMVGFFI). Over 100–109 (SKTPWTRFGR) the chain is Cytoplasmic. Residues 110–129 (LMPWIIFSTPFAVISYFLIW) form a helical membrane-spanning segment. The Extracellular portion of the chain corresponds to 130–138 (FVPDISTGQ). A helical membrane pass occupies residues 139 to 161 (VMWYLIFYCIFQTLVTCFHVPYS). Over 162 to 176 (ALTMFISREQSERDS) the chain is Cytoplasmic. Residues 177 to 199 (ATAYRMTVEVLGTVLGTAIQGQI) traverse the membrane as a helical segment. Residues 200–241 (VGKAVTPCIENPPFLSETNFSVAIRNVNMTHYTGSLADTRNA) are Extracellular-facing. A disulfide bond links Cys207 and Cys460. N-linked (GlcNAc...) asparagine glycosylation is found at Asn218 and Asn227. A helical membrane pass occupies residues 242–263 (YMVAAGVIGGLYILCAVILSVG). At 264 to 295 (VREKRESSELQSDEPVSFFRGLKLVMNHGAYI) the chain is on the cytoplasmic side. Residues 296–319 (KLITGFLFTSLAFMLLEGNFALFC) traverse the membrane as a helical segment. Residues 320–328 (TYTLGFRNE) lie on the Extracellular side of the membrane. A helical transmembrane segment spans residues 329–351 (FQNILLAIMLSATLTIPFWQWFL). Residues 352–355 (TRFG) lie on the Cytoplasmic side of the membrane. Residues 356-376 (KKTAVYVGISSAVPFLITVVV) form a helical membrane-spanning segment. Topologically, residues 377–381 (LDSNL) are extracellular. Residues 382 to 404 (VVTYIVAVAAGISVAAAFLLPWS) form a helical membrane-spanning segment. The Cytoplasmic segment spans residues 405–427 (MLPDVIDDFKLQHPESRGHEAIF). Residues 428-450 (FSFYVFFTKFTSGVSLGISTLSL) traverse the membrane as a helical segment. Residues 451 to 467 (DFAGYQTRGCSQPSEVN) lie on the Extracellular side of the membrane. The chain crosses the membrane as a helical span at residues 468-490 (ITLKLLVSAVPVGLILLGLLLFK). Topologically, residues 491 to 528 (LYPIDEEKRRENKKALQDLREESNSSSESDSTELANIV) are cytoplasmic. Positions 503–513 (KKALQDLREES) are enriched in basic and acidic residues. The segment at 503 to 528 (KKALQDLREESNSSSESDSTELANIV) is disordered. The segment covering 514 to 528 (NSSSESDSTELANIV) has biased composition (low complexity).

Belongs to the major facilitator superfamily.

The protein localises to the cell membrane. The protein resides in the endoplasmic reticulum membrane. It catalyses the reaction a 1-acyl-sn-glycero-3-phosphocholine(in) + Na(+)(in) = a 1-acyl-sn-glycero-3-phosphocholine(out) + Na(+)(out). It carries out the reaction 1-(4Z,7Z,10Z,13Z,16Z,19Z-docosahexaenoyl)-sn-glycero-3-phosphocholine(in) + Na(+)(in) = 1-(4Z,7Z,10Z,13Z,16Z,19Z-docosahexaenoyl)-sn-glycero-3-phosphocholine(out) + Na(+)(out). The catalysed reaction is 1-(9Z-octadecenoyl)-sn-glycero-3-phosphocholine(in) + Na(+)(in) = 1-(9Z-octadecenoyl)-sn-glycero-3-phosphocholine(out) + Na(+)(out). The enzyme catalyses 1-hexadecanoyl-sn-glycero-3-phosphocholine(in) + Na(+)(in) = 1-hexadecanoyl-sn-glycero-3-phosphocholine(out) + Na(+)(out). It catalyses the reaction a 1-acyl-sn-glycero-3-phosphoethanolamine(in) + Na(+)(in) = a 1-acyl-sn-glycero-3-phosphoethanolamine(out) + Na(+)(out). Its function is as follows. Sodium-dependent lysophosphatidylcholine (LPC) symporter, which plays an essential role for blood-brain barrier formation and function. Specifically expressed in endothelium of the blood-brain barrier of micro-vessels and transports LPC into the brain. Transport of LPC is essential because it constitutes the major mechanism by which docosahexaenoic acid (DHA), an omega-3 fatty acid that is essential for normal brain growth and cognitive function, enters the brain. Transports LPC carrying long-chain fatty acids such LPC oleate and LPC palmitate with a minimum acyl chain length of 14 carbons. Does not transport docosahexaenoic acid in unesterified fatty acid. This Gallus gallus (Chicken) protein is Sodium-dependent lysophosphatidylcholine symporter 1.